Here is a 451-residue protein sequence, read N- to C-terminus: Tubulin alpha-1/alpha-2 chain (451 aa).

A GTP-binding site is contributed by Q11. Position 40 is an N6-acetyllysine (K40). Residues E71, G144, T145, T179, N206, and N228 each contribute to the GTP site. Mg(2+) is bound at residue E71. E254 is a catalytic residue.

It belongs to the tubulin family. Dimer of alpha and beta chains. A typical microtubule is a hollow water-filled tube with an outer diameter of 25 nm and an inner diameter of 15 nM. Alpha-beta heterodimers associate head-to-tail to form protofilaments running lengthwise along the microtubule wall with the beta-tubulin subunit facing the microtubule plus end conferring a structural polarity. Microtubules usually have 13 protofilaments but different protofilament numbers can be found in some organisms and specialized cells. Mg(2+) serves as cofactor. Undergoes a tyrosination/detyrosination cycle, the cyclic removal and re-addition of a C-terminal tyrosine residue by the enzymes tubulin tyrosine carboxypeptidase (TTCP) and tubulin tyrosine ligase (TTL), respectively. In terms of processing, acetylation of alpha chains at Lys-40 stabilizes microtubules and affects affinity and processivity of microtubule motors. This modification has a role in multiple cellular functions, ranging from cell motility, cell cycle progression or cell differentiation to intracellular trafficking and signaling.

The protein localises to the cytoplasm. It is found in the cytoskeleton. The enzyme catalyses GTP + H2O = GDP + phosphate + H(+). Tubulin is the major constituent of microtubules, a cylinder consisting of laterally associated linear protofilaments composed of alpha- and beta-tubulin heterodimers. Microtubules grow by the addition of GTP-tubulin dimers to the microtubule end, where a stabilizing cap forms. Below the cap, tubulin dimers are in GDP-bound state, owing to GTPase activity of alpha-tubulin. The chain is Tubulin alpha-1/alpha-2 chain (TUBA1) from Volvox carteri (Green alga).